The chain runs to 185 residues: ATP synthase subunit delta (185 aa).

It belongs to the ATPase delta chain family. In terms of assembly, F-type ATPases have 2 components, F(1) - the catalytic core - and F(0) - the membrane proton channel. F(1) has five subunits: alpha(3), beta(3), gamma(1), delta(1), epsilon(1). CF(0) has four main subunits: a(1), b(1), b'(1) and c(10-14). The alpha and beta chains form an alternating ring which encloses part of the gamma chain. F(1) is attached to F(0) by a central stalk formed by the gamma and epsilon chains, while a peripheral stalk is formed by the delta, b and b' chains.

Its subcellular location is the cellular thylakoid membrane. Its function is as follows. F(1)F(0) ATP synthase produces ATP from ADP in the presence of a proton or sodium gradient. F-type ATPases consist of two structural domains, F(1) containing the extramembraneous catalytic core and F(0) containing the membrane proton channel, linked together by a central stalk and a peripheral stalk. During catalysis, ATP synthesis in the catalytic domain of F(1) is coupled via a rotary mechanism of the central stalk subunits to proton translocation. This protein is part of the stalk that links CF(0) to CF(1). It either transmits conformational changes from CF(0) to CF(1) or is implicated in proton conduction. The chain is ATP synthase subunit delta from Acaryochloris marina (strain MBIC 11017).